We begin with the raw amino-acid sequence, 562 residues long: Protein TBF1 (562 aa).

Positions 376 to 414 are disordered; it reads ASMSNSSSGPHSSHNNSSNSNNNGSIGLRKPKAKRTWSK. A compositionally biased stretch (low complexity) spans 377 to 400; sequence SMSNSSSGPHSSHNNSSNSNNNGS. An HTH myb-type domain is found at 404–460; that stretch reads RKPKAKRTWSKEEEEALVEGLKEVGPSWSKILDLYGPGGKITENLKNRTQVQLKDKA. Positions 431–456 form a DNA-binding region, H-T-H motif; that stretch reads WSKILDLYGPGGKITENLKNRTQVQL. Residues 495–562 are disordered; the sequence is FSQSPNSSTI…GFDPHLEDGM (68 aa). Composition is skewed to polar residues over residues 496 to 522 and 532 to 552; these read SQSP…ATED and GQNS…SDNT.

As to quaternary structure, homodimer.

It localises to the nucleus. The protein resides in the chromosome. It is found in the telomere. In terms of biological role, binds the telomeric double-stranded TTAGGG repeat and negatively regulates telomere length. Involved in the regulation of gene expression. 52 binding sites have been identified, distributed over 15 chromosomes. A member of the general regulatory factors (GRFs) which act as genome partitioners. Acts as a chromatin insulator which are known as STARs (Subtelomeric anti-silencing region). STARs prevent negative or positive transcription influence by extending across chromatin to a promoter. In Saccharomyces cerevisiae (strain ATCC 204508 / S288c) (Baker's yeast), this protein is Protein TBF1 (TBF1).